The sequence spans 346 residues: Tripartite motif-containing protein 44 (346 aa).

Positions 68 to 167 are disordered; sequence TPPASGGDDA…ETEAESEFDP (100 aa). Positions 89 to 167 are enriched in acidic residues; it reads EGEVESEVGE…ETEAESEFDP (79 aa). The B box-type zinc finger occupies 176 to 217; that stretch reads VAKRKCPDHGLDLSTYCQEDRQLICVLCPVIGAHRGHQLSTL. Zn(2+)-binding residues include Cys181, His184, Cys203, and His209. Residues 292 to 327 are a coiled coil; it reads AHVTEILADIQSHMDRLMTQMAQAKEQLDTSNESAE. The interval 313 to 346 is disordered; the sequence is AQAKEQLDTSNESAEPKAEGDEEGPSGASEEEDT. Positions 332 to 346 are enriched in acidic residues; it reads GDEEGPSGASEEEDT. A phosphoserine mark is found at Ser338 and Ser341.

In terms of assembly, interacts (via coiled coil) with TRIM17 (via coiled coil). In terms of tissue distribution, expressed mainly in brain with high level in cerebral hemispheres and cerebellum. Lower expression in kidney, lung and spleen. In brain is detected in the hippocampus, thalamic and pretectal nuclei, substantia nigra, the dorsal part of the medulla, the cerebellum, in the olfactory nucleus, other cortical areas apart from hippocampus and the striatum. Indeed expression is confined in neuronal somata namely in the CA3 region and dentate gyrus of the hippocampus, caudate-putamen, parabranchial nucleus, olfactory nucleus, cortex, deep cerebellar nuclei and thalamus. Also highly expressed in the spleen. thymus and testis.

In terms of biological role, may play a role in the process of differentiation and maturation of neuronal cells. May regulate the activity of TRIM17. Is a negative regulator of PAX6 expression. This is Tripartite motif-containing protein 44 (Trim44) from Mus musculus (Mouse).